A 1197-amino-acid polypeptide reads, in one-letter code: Envelopment polyprotein (1197 aa).

Positions Met-1 to Ala-16 are cleaved as a signal peptide. Topologically, residues Ile-17 to Thr-130 are cytoplasmic. An internal signal sequence for glycoprotein N region spans residues Met-131–Ala-153. Topologically, residues Glu-154–Ala-582 are lumenal. 12 disulfides stabilise this stretch: Cys-179–Cys-188, Cys-229–Cys-239, Cys-250–Cys-281, Cys-271–Cys-284, Cys-304–Cys-456, Cys-322–Cys-332, Cys-374–Cys-434, Cys-402–Cys-413, Cys-420–Cys-425, Cys-479–Cys-482, Cys-486–Cys-556, and Cys-506–Cys-511. The chain crosses the membrane as a helical span at residues Leu-583–Leu-603. Topologically, residues Tyr-604–Pro-673 are cytoplasmic. Positions Lys-608–Ile-650 are golgi retention signal. The interval Val-646 to Ile-650 is important for correct targeting of the glycoproteins to the Golgi complex but not for heterodimerization. The tract at residues Tyr-675–Ala-690 is internal signal sequence for glycoprotein C. 12 disulfide bridges follow: Cys-691–Cys-731, Cys-704–Cys-713, Cys-756–Cys-852, Cys-771–Cys-965, Cys-777–Cys-825, Cys-783–Cys-832, Cys-788–Cys-814, Cys-818–Cys-823, Cys-934–Cys-947, Cys-1029–Cys-1101, Cys-1039–Cys-1042, and Cys-1049–Cys-1083. At Cys-691–Thr-1159 the chain is on the lumenal side. The segment at Cys-777–Cys-783 is fusion loop. Asn-794 carries an N-linked (GlcNAc...) asparagine; by host glycan. The tract at residues Gly-819–Pro-830 is fusion loop. The N-linked (GlcNAc...) asparagine; by host glycan is linked to Asn-1035. N-linked (GlcNAc...) asparagine; by host glycosylation occurs at Asn-1077. A helical transmembrane segment spans residues Ile-1160–Leu-1180. The Cytoplasmic portion of the chain corresponds to Gly-1181–Ser-1197.

This sequence belongs to the phlebovirus envelope glycoprotein family. As to quaternary structure, heterodimer with glycoprotein C. Homotrimer (postfusion). Interacts with nucleocapsid protein N and with the polymerase L in order to package them into virus particles. Interacts with host E3 ubiquitin-protein ligase UBR4; this interaction is important for viral RNA production. Interacts with host LRP1; this interaction facilitates virus entry into the host cell. Heterodimer with glycoprotein C. Post-translationally, specific enzymatic cleavages in vivo yield mature proteins including NSm protein, Glycoprotein C, and Glycoprotein N. In terms of processing, glycosylated. The glycans can attach to host CD209/DC-SIGN, and may play a role in virus entry into dendritic cells. Palmitoylated.

Its subcellular location is the virion membrane. It localises to the host Golgi apparatus membrane. The protein resides in the host endoplasmic reticulum membrane. The protein localises to the host mitochondrion outer membrane. It is found in the host Golgi apparatus. Its subcellular location is the virion. Its function is as follows. Structural component of the virion that interacts with glycoprotein C. It shields the hydrophobic fusion loops of the glycoprotein C, preventing premature fusion. The glycoprotein protrusions are arranged on an icosahedral lattice, with T=12 triangulation. They are able to attach the virion to the host cell receptor CD209/DC-SIGN and to promote fusion of membranes with the late endosome after endocytosis of the virion. Plays a role in the packaging of ribonucleoproteins and polymerase during virus assembly. Functionally, structural component of the virion that interacts with glycoprotein N. Acts as a class II fusion protein that is activated upon acidification and subsequent repositioning of the glycoprotein N. The glycoprotein protrusions are arranged on an icosahedral lattice, with T=12 triangulation. They are able to attach the virion to the host cell receptor CD209/DC-SIGN and to promote fusion of membranes with the late endosome after endocytosis of the virion. Plays a role in the inhibition of virus-induced apoptosis. Plays a role for virus dissemination in vertebrates. In terms of biological role, plays a role for virus dissemination in mosquitoes. May act as a structural virion protein in insects. This is Envelopment polyprotein (GP) from Rift valley fever virus (strain ZH-548 M12) (RVFV).